The sequence spans 319 residues: Malate dehydrogenase (319 aa).

Residues 10–15 and Asp-34 contribute to the NAD(+) site; that span reads GAGQIG. Substrate is bound by residues Arg-85 and Arg-91. Residues Asn-98 and 121 to 123 contribute to the NAD(+) site; that span reads ITN. 2 residues coordinate substrate: Asn-123 and Arg-154. His-178 (proton acceptor) is an active-site residue.

Belongs to the LDH/MDH superfamily. MDH type 3 family.

The catalysed reaction is (S)-malate + NAD(+) = oxaloacetate + NADH + H(+). Functionally, catalyzes the reversible oxidation of malate to oxaloacetate. This chain is Malate dehydrogenase, found in Rhodospirillum centenum (strain ATCC 51521 / SW).